A 147-amino-acid polypeptide reads, in one-letter code: Ubiquitin-conjugating enzyme E2 D3 (147 aa).

The region spanning 1-147 (MALKRINKEL…SREWTQKYAM (147 aa)) is the UBC core domain. A disulfide bridge connects residues cysteine 21 and cysteine 107. Catalysis depends on cysteine 85, which acts as the Glycyl thioester intermediate.

The protein belongs to the ubiquitin-conjugating enzyme family. As to quaternary structure, interacts with SCF (SKP1-CUL1-F-box protein) E3 ubiquitin ligase complex; when Cullin is neddylated, the interaction between the E2 and the SCF complex is strengthened. Interacts with DAPK3. Interacts with BRCA1; the DNA damage checkpoint promotes the association with BRCA1 after ionizing radiation. Interacts non-covalently with ubiquitin. Interacts with E3 ubiquitin-protein ligase CBLC. Interacts with UBTD1. Interacts with RIGI and RNF135; involved in RIGI ubiquitination and activation. Phosphorylated by AURKB.

Its subcellular location is the cell membrane. The protein resides in the endosome membrane. It carries out the reaction S-ubiquitinyl-[E1 ubiquitin-activating enzyme]-L-cysteine + [E2 ubiquitin-conjugating enzyme]-L-cysteine = [E1 ubiquitin-activating enzyme]-L-cysteine + S-ubiquitinyl-[E2 ubiquitin-conjugating enzyme]-L-cysteine.. The enzyme catalyses S-ubiquitinyl-[E1 ubiquitin-activating enzyme]-L-cysteine + [acceptor protein]-L-lysine = [E1 ubiquitin-activating enzyme]-L-cysteine + N(6)-monoubiquitinyl-[acceptor protein]-L-lysine.. It participates in protein modification; protein ubiquitination. Its function is as follows. Accepts ubiquitin from the E1 complex and catalyzes its covalent attachment to other proteins. In vitro catalyzes 'Lys-11'-, as well as 'Lys-48'-linked polyubiquitination. Cooperates with the E2 CDC34 and the SCF(FBXW11) E3 ligase complex for the polyubiquitination of NFKBIA leading to its subsequent proteasomal degradation. Acts as an initiator E2, priming the phosphorylated NFKBIA target at positions 'Lys-21' and/or 'Lys-22' with a monoubiquitin. Ubiquitin chain elongation is then performed by CDC34, building ubiquitin chains from the UBE2D3-primed NFKBIA-linked ubiquitin. Also acts as an initiator E2, in conjunction with RNF8, for the priming of PCNA. Monoubiquitination of PCNA, and its subsequent polyubiquitination, are essential events in the operation of the DNA damage tolerance (DDT) pathway that is activated after DNA damage caused by UV or chemical agents during S-phase. Associates with the BRCA1/BARD1 E3 ligase complex to perform ubiquitination at DNA damage sites following ionizing radiation leading to DNA repair. Targets DAPK3 for ubiquitination which influences promyelocytic leukemia protein nuclear body (PML-NB) formation in the nucleus. In conjunction with the MDM2 and TOPORS E3 ligases, functions ubiquitination of p53/TP53. In conjunction with the CBL E3 ligase, targets EGFR for polyubiquitination at the plasma membrane as well as during its internalization and transport on endosomes. In conjunction with the STUB1 E3 quality control E3 ligase, ubiquitinates unfolded proteins to catalyze their immediate destruction. Together with RNF135, catalyzes the viral RNA-dependent 'Lys-63'-linked polyubiquitination of RIGI to activate the downstream signaling pathway that leads to interferon beta production. Together with ZNF598, catalyzes ubiquitination of 40S ribosomal proteins in response to ribosome collisions. In cooperation with the GATOR2 complex, catalyzes 'Lys-6'-linked ubiquitination of NPRL2. The sequence is that of Ubiquitin-conjugating enzyme E2 D3 (UBE2D3) from Homo sapiens (Human).